The primary structure comprises 148 residues: Large ribosomal subunit protein bL9 (148 aa).

It belongs to the bacterial ribosomal protein bL9 family.

Binds to the 23S rRNA. The polypeptide is Large ribosomal subunit protein bL9 (Lachnoclostridium phytofermentans (strain ATCC 700394 / DSM 18823 / ISDg) (Clostridium phytofermentans)).